Consider the following 329-residue polypeptide: ADP-L-glycero-D-manno-heptose-6-epimerase (329 aa).

Residues 10–11 (FI), 31–32 (DD), Lys38, Lys53, 74–78 (QGACS), and Asn91 each bind NADP(+). The active-site Proton acceptor is the Tyr138. Residue Lys142 participates in NADP(+) binding. Asn167 serves as a coordination point for substrate. Val168 and Lys176 together coordinate NADP(+). Residue Lys176 is the Proton acceptor of the active site. Substrate-binding positions include Arg178, His185, 199–202 (FAGW), Arg212, and Tyr291.

It belongs to the NAD(P)-dependent epimerase/dehydratase family. HldD subfamily. Homopentamer. Requires NADP(+) as cofactor.

The enzyme catalyses ADP-D-glycero-beta-D-manno-heptose = ADP-L-glycero-beta-D-manno-heptose. It functions in the pathway nucleotide-sugar biosynthesis; ADP-L-glycero-beta-D-manno-heptose biosynthesis; ADP-L-glycero-beta-D-manno-heptose from D-glycero-beta-D-manno-heptose 7-phosphate: step 4/4. Its pathway is bacterial outer membrane biogenesis; LPS core biosynthesis. Catalyzes the interconversion between ADP-D-glycero-beta-D-manno-heptose and ADP-L-glycero-beta-D-manno-heptose via an epimerization at carbon 6 of the heptose. This Bordetella parapertussis (strain 12822 / ATCC BAA-587 / NCTC 13253) protein is ADP-L-glycero-D-manno-heptose-6-epimerase.